A 142-amino-acid polypeptide reads, in one-letter code: Multiprotein-bridging factor 1b (142 aa).

A disordered region spans residues 49–75 (NAGSNKAASSGTSLNTKKLDDDTENLS). A compositionally biased stretch (polar residues) spans 50–64 (AGSNKAASSGTSLNT). A compositionally biased stretch (basic and acidic residues) spans 65–75 (KKLDDDTENLS). Residues 87-141 (IMQARGEKKLTQSQLAHLINEKPQVIQEYESGKAIPNQQILSKLERALGAKLRGK) enclose the HTH cro/C1-type domain. Positions 98-117 (QSQLAHLINEKPQVIQEYES) form a DNA-binding region, H-T-H motif.

The protein belongs to the MBF1 family. As to expression, expressed in leaves, roots, stems, petioles and shoots. Higher expression in flowers and siliques. Detected in leaf veins through development.

The protein localises to the nucleus. It localises to the nucleolus. Functionally, transcriptional coactivator that stimulates transcriptional activity by bridging regulatory proteins and TBP, thereby recruiting TBP to promoters occupied by DNA-binding regulators. This chain is Multiprotein-bridging factor 1b (MBF1B), found in Arabidopsis thaliana (Mouse-ear cress).